The primary structure comprises 176 residues: Ribosome maturation factor RimM (176 aa).

A PRC barrel domain is found at 99 to 174 (KDEFYVRDLI…IVLIQPELWN (76 aa)).

The protein belongs to the RimM family. As to quaternary structure, binds ribosomal protein uS19.

It localises to the cytoplasm. Its function is as follows. An accessory protein needed during the final step in the assembly of 30S ribosomal subunit, possibly for assembly of the head region. Essential for efficient processing of 16S rRNA. May be needed both before and after RbfA during the maturation of 16S rRNA. It has affinity for free ribosomal 30S subunits but not for 70S ribosomes. In Leptospira borgpetersenii serovar Hardjo-bovis (strain JB197), this protein is Ribosome maturation factor RimM.